A 154-amino-acid chain; its full sequence is uncharacterized protein (154 aa).

One can recognise a HotDog ACOT-type domain in the interval 13–128 (SKGVLLLRTL…VFTFVAVDNN (116 aa)).

The protein belongs to the acyl coenzyme A hydrolase family.

This is an uncharacterized protein from Haemophilus influenzae (strain ATCC 51907 / DSM 11121 / KW20 / Rd).